A 161-amino-acid polypeptide reads, in one-letter code: Nucleotide-binding protein Shewmr4_3156 (161 aa).

Belongs to the YajQ family.

In terms of biological role, nucleotide-binding protein. The chain is Nucleotide-binding protein Shewmr4_3156 from Shewanella sp. (strain MR-4).